The primary structure comprises 626 residues: Acetolactate synthase large subunit (626 aa).

Over residues 1 to 13 the composition is skewed to polar residues; it reads MNVAASQQPTPAT. The segment at 1 to 23 is disordered; the sequence is MNVAASQQPTPATVASRGRSAAP. Residue Glu-73 coordinates thiamine diphosphate. FAD-binding positions include Arg-175, 281–302, and 324–343; these read HGTV…IGSR and DIDP…IVGD. Residues 416–496 form a thiamine pyrophosphate binding region; sequence QHQMWAAQFV…IKIALINNGN (81 aa). Positions 467 and 494 each coordinate Mg(2+).

Belongs to the TPP enzyme family. In terms of assembly, dimer of large and small chains. Mg(2+) is required as a cofactor. Requires thiamine diphosphate as cofactor.

It carries out the reaction 2 pyruvate + H(+) = (2S)-2-acetolactate + CO2. It functions in the pathway amino-acid biosynthesis; L-isoleucine biosynthesis; L-isoleucine from 2-oxobutanoate: step 1/4. It participates in amino-acid biosynthesis; L-valine biosynthesis; L-valine from pyruvate: step 1/4. This Corynebacterium glutamicum (strain ATCC 13032 / DSM 20300 / JCM 1318 / BCRC 11384 / CCUG 27702 / LMG 3730 / NBRC 12168 / NCIMB 10025 / NRRL B-2784 / 534) protein is Acetolactate synthase large subunit (ilvB).